Reading from the N-terminus, the 326-residue chain is tRNA dimethylallyltransferase (326 aa).

10–17 (GPTGTGKT) is a binding site for ATP. 12-17 (TGTGKT) serves as a coordination point for substrate. Residues 35 to 38 (DSMQ) are interaction with substrate tRNA.

Belongs to the IPP transferase family. Monomer. It depends on Mg(2+) as a cofactor.

The enzyme catalyses adenosine(37) in tRNA + dimethylallyl diphosphate = N(6)-dimethylallyladenosine(37) in tRNA + diphosphate. Catalyzes the transfer of a dimethylallyl group onto the adenine at position 37 in tRNAs that read codons beginning with uridine, leading to the formation of N6-(dimethylallyl)adenosine (i(6)A). The sequence is that of tRNA dimethylallyltransferase from Dictyoglomus turgidum (strain DSM 6724 / Z-1310).